A 1040-amino-acid polypeptide reads, in one-letter code: Multidrug resistance protein MdtB (1040 aa).

A run of 12 helical transmembrane segments spans residues 16 to 36, 347 to 367, 369 to 389, 396 to 416, 440 to 460, 472 to 492, 537 to 557, 863 to 883, 888 to 908, 911 to 931, 968 to 988, and 998 to 1018; these read FIMR…AGII, LMMA…NIPA, IIPG…MVFL, LTLM…IVVI, IGFT…PLLF, FAIT…TLTP, WLTL…WVFI, LGST…VLGI, FIHP…ALLA, IAGS…IGIV, ILMT…STGV, and IGMV…TPVI.

It belongs to the resistance-nodulation-cell division (RND) (TC 2.A.6) family. MdtB subfamily. In terms of assembly, part of a tripartite efflux system composed of MdtA, MdtB and MdtC. MdtB forms a heteromultimer with MdtC.

The protein localises to the cell inner membrane. The MdtABC tripartite complex confers resistance against novobiocin and deoxycholate. The polypeptide is Multidrug resistance protein MdtB (Escherichia coli O45:K1 (strain S88 / ExPEC)).